Reading from the N-terminus, the 238-residue chain is Androgen-induced gene 1 protein (238 aa).

Over 1-12 the chain is Cytoplasmic; that stretch reads MALVPCQVLRMA. A helical membrane pass occupies residues 13 to 30; it reads ILLSYCSILCNYKAIEMP. Residues 31-44 are Extracellular-facing; that stretch reads SHQTYGGSWKFLTF. Residues 45–67 traverse the membrane as a helical segment; the sequence is IDLVIQAVFFGICVLTDLSSLLT. Residues 68-87 are Cytoplasmic-facing; that stretch reads RGSGNQEQERQLKKLISLRD. A helical membrane pass occupies residues 88 to 110; it reads WMLAVLAFPVGVFVVAVFWIIYA. Residues 111–124 lie on the Extracellular side of the membrane; the sequence is YDREMIYPKLLDNF. Residues 125-144 traverse the membrane as a helical segment; sequence IPGWLNHGMHTTVLPFILIE. Over 145 to 156 the chain is Cytoplasmic; that stretch reads MRTSHHQYPSRS. A helical transmembrane segment spans residues 157-179; the sequence is SGLTAICTFSVGYILWVCWVHHV. Over 180 to 193 the chain is Extracellular; it reads TGMWVYPFLEHIGP. A helical membrane pass occupies residues 194–216; the sequence is GARIIFFGSTTILMNFLYLLGEV. Residues 217–238 lie on the Cytoplasmic side of the membrane; that stretch reads LNNYIWDTQKSMEEEKEKPKLE.

Belongs to the AIG1 family. Highly expressed in heart, ovary, testis, liver, and kidney, at lower levels in spleen, prostate, brain, skeletal muscle, pancreas, small intestine and colon, and undetected in peripheral blood leukocytes, thymus, lung and placenta. AIG1 expression is higher in hair follicles from males than from females.

It is found in the cell membrane. The enzyme catalyses 9-hexadecanoyloxy-octadecanoate + H2O = 9-hydroxy-octadecanoate + hexadecanoate + H(+). It catalyses the reaction 12-hexadecanoyloxy-octadecanoate + H2O = 12-hydroxyoctadecanoate + hexadecanoate + H(+). The catalysed reaction is 9-(9Z-hexadecenoyloxy)-octadecanoate + H2O = (9Z)-hexadecenoate + 9-hydroxy-octadecanoate + H(+). It carries out the reaction 12-(9Z-hexadecenoyloxy)-octadecanoate + H2O = 12-hydroxyoctadecanoate + (9Z)-hexadecenoate + H(+). The enzyme catalyses 13-(9Z-hexadecenoyloxy)-octadecanoate + H2O = 13-hydroxy-octadecanoate + (9Z)-hexadecenoate + H(+). It catalyses the reaction 9-octadecanoyloxy-octadecanoate + H2O = 9-hydroxy-octadecanoate + octadecanoate + H(+). The catalysed reaction is 12-octadecanoyloxy-octadecanoate + H2O = 12-hydroxyoctadecanoate + octadecanoate + H(+). It carries out the reaction 13-octadecanoyloxy-octadecanoate + H2O = 13-hydroxy-octadecanoate + octadecanoate + H(+). The enzyme catalyses 9-(9Z-octadecenoyloxy)-octadecanoate + H2O = 9-hydroxy-octadecanoate + (9Z)-octadecenoate + H(+). It catalyses the reaction 12-(9Z-octadecenoyloxy)-octadecanoate + H2O = 12-hydroxyoctadecanoate + (9Z)-octadecenoate + H(+). The catalysed reaction is 13-(9Z-octadecenoyloxy)-octadecanoate + H2O = 13-hydroxy-octadecanoate + (9Z)-octadecenoate + H(+). It carries out the reaction 5-(9Z-hexadecenoyloxy)-octadecanoate + H2O = 5-hydroxy-octadecanoate + (9Z)-hexadecenoate + H(+). Inhibited by N-hydroxyhydantoin carbamate JJH260 and beta-lactone KC01. Hydrolyzes bioactive fatty-acid esters of hydroxy-fatty acids (FAHFAs), but not other major classes of lipids. Show a preference for FAHFAs with branching distal from the carboxylate head group of the lipids. The protein is Androgen-induced gene 1 protein (AIG1) of Homo sapiens (Human).